We begin with the raw amino-acid sequence, 426 residues long: UPF0229 protein Csal_0882 (426 aa).

Residues 82-93 (FVEGDRLRRPGG) show a composition bias toward basic and acidic residues. The segment at 82–109 (FVEGDRLRRPGGEGRGGSGEGSASNQGE) is disordered.

The protein belongs to the UPF0229 family.

In Chromohalobacter salexigens (strain ATCC BAA-138 / DSM 3043 / CIP 106854 / NCIMB 13768 / 1H11), this protein is UPF0229 protein Csal_0882.